A 185-amino-acid polypeptide reads, in one-letter code: dCTP deaminase (185 aa).

Residues 107 to 112, 131 to 133, glutamine 152, tyrosine 166, and glutamine 176 each bind dCTP; these read KSTYAR and TLE. Glutamate 133 (proton donor/acceptor) is an active-site residue.

Belongs to the dCTP deaminase family. As to quaternary structure, homotrimer.

It carries out the reaction dCTP + H2O + H(+) = dUTP + NH4(+). Its pathway is pyrimidine metabolism; dUMP biosynthesis; dUMP from dCTP (dUTP route): step 1/2. In terms of biological role, catalyzes the deamination of dCTP to dUTP. This chain is dCTP deaminase, found in Anaplasma marginale (strain Florida).